We begin with the raw amino-acid sequence, 82 residues long: Sec-independent protein translocase protein TatA (82 aa).

The helical transmembrane segment at 1 to 21 (MGSFSIWHWLIVLLIVVMVFG) threads the bilayer. The interval 46–82 (GASTDDSATTSAPAGQVTNNSAAADKTTIDVEAKHKS) is disordered. Positions 49–67 (TDDSATTSAPAGQVTNNSA) are enriched in polar residues. Basic and acidic residues predominate over residues 72 to 82 (TTIDVEAKHKS).

The protein belongs to the TatA/E family. In terms of assembly, the Tat system comprises two distinct complexes: a TatABC complex, containing multiple copies of TatA, TatB and TatC subunits, and a separate TatA complex, containing only TatA subunits. Substrates initially bind to the TatABC complex, which probably triggers association of the separate TatA complex to form the active translocon.

Its subcellular location is the cell inner membrane. Part of the twin-arginine translocation (Tat) system that transports large folded proteins containing a characteristic twin-arginine motif in their signal peptide across membranes. TatA could form the protein-conducting channel of the Tat system. The chain is Sec-independent protein translocase protein TatA from Acidovorax ebreus (strain TPSY) (Diaphorobacter sp. (strain TPSY)).